Consider the following 675-residue polypeptide: GAVETLQGKAATGELLEKSVNTIRFLAIDAVEKANSGHPGLPMGCAPMGHVLYDEVMRYNPKNPYWFNRDRFVLSAGHGCMLQYALLHLAGYDSVKEEDLKQFRQWGSRTPGHPENFETPGVEVTTGPLGQGIANAVGLALAEKHLAARFNKPDSEIVDHYTYVILGDGCQMEGIANEACSLAGHWGLGKLIAFYDDNHISIDGDTEIAFTEDVSTRFEALGWHTIWVKNGNTGYDDIRAAIKEAKAVTDKPTLIKVTTTIGFGSPNKANSYSVHGSALGAKEVEATRQNLGWPYDTFFVPEDVKSHWSRHTPEGAALEADWNAKFAEYEKKYADDAATLKSIITGELPTGWVDALPKYTPESPGDATRNLSQQCLNALANVVPGLIGGSADLASSNMTLLKMFGDFQKDTAEERNVRFGVREHGMGAICNGIALHSPGFVPYCATFFVFTDYMRGAMRISALSEAGVIYVMTHDSIGLGEDGPTHQPIEHLVSFRAMPNILMLRPADGNETAGAYKVAVLNRKRPSILALSRQKLPHLPGTSIEGVEKGGYTISDNSTGNKPDLIVMGTGSELEIAAKAADELRKEGKTVRVVSFVSWELFDEQSDEYKESVLPAAVTARISIEAGSTLGWQKYVGAQGKAIGIDKFGASAPAGTIYKEYGITVESIIAAAKSF.

Thiamine diphosphate contacts are provided by residues His78 and 127-129 (GPL). A Mg(2+)-binding site is contributed by Asp168. 3 residues coordinate thiamine diphosphate: Gly169, Glu173, and Asn198. Mg(2+) is bound by residues Asn198 and Ile200. His275 lines the thiamine diphosphate pocket. 3 residues coordinate substrate: His275, Arg369, and Ser396. Thiamine diphosphate contacts are provided by residues Glu423 and 450–453 (FTDY). Glu423 acts as the Proton donor in catalysis. Residues His474, Asp482, and Arg533 each coordinate substrate.

In terms of assembly, homodimer. Requires Mg(2+) as cofactor. Ca(2+) is required as a cofactor. It depends on Mn(2+) as a cofactor. Co(2+) serves as cofactor. The cofactor is thiamine diphosphate.

The protein localises to the plastid. The protein resides in the chloroplast thylakoid membrane. It carries out the reaction D-sedoheptulose 7-phosphate + D-glyceraldehyde 3-phosphate = aldehydo-D-ribose 5-phosphate + D-xylulose 5-phosphate. It participates in carbohydrate biosynthesis; Calvin cycle. In terms of biological role, catalyzes the reversible transfer of a two-carbon ketol group from fructose-6-phosphate or sedoheptulose-7-phosphate to glyceraldehyde-3-phosphate to yield xylulose-5-phosphate and erythrose-4-phosphate or ribose-5-phosphate, respectively. This is Transketolase, chloroplastic from Zea mays (Maize).